We begin with the raw amino-acid sequence, 99 residues long: UPF0213 protein PC1_0597 (99 aa).

In terms of domain architecture, GIY-YIG spans 8–83; that stretch reads PQWYLYILRT…KQLSKNQKER (76 aa).

Belongs to the UPF0213 family.

The protein is UPF0213 protein PC1_0597 of Pectobacterium carotovorum subsp. carotovorum (strain PC1).